A 429-amino-acid chain; its full sequence is UDP-N-acetylglucosamine 1-carboxyvinyltransferase (429 aa).

Residue 22–23 (KN) participates in phosphoenolpyruvate binding. Arginine 102 lines the UDP-N-acetyl-alpha-D-glucosamine pocket. Cysteine 126 acts as the Proton donor in catalysis. Cysteine 126 carries the 2-(S-cysteinyl)pyruvic acid O-phosphothioketal modification. UDP-N-acetyl-alpha-D-glucosamine contacts are provided by residues 131–135 (RPVDL), aspartate 316, and isoleucine 338.

It belongs to the EPSP synthase family. MurA subfamily.

The protein localises to the cytoplasm. The catalysed reaction is phosphoenolpyruvate + UDP-N-acetyl-alpha-D-glucosamine = UDP-N-acetyl-3-O-(1-carboxyvinyl)-alpha-D-glucosamine + phosphate. Its pathway is cell wall biogenesis; peptidoglycan biosynthesis. Its function is as follows. Cell wall formation. Adds enolpyruvyl to UDP-N-acetylglucosamine. In Nitrobacter winogradskyi (strain ATCC 25391 / DSM 10237 / CIP 104748 / NCIMB 11846 / Nb-255), this protein is UDP-N-acetylglucosamine 1-carboxyvinyltransferase.